The sequence spans 816 residues: uncharacterized protein (816 aa).

Disordered stretches follow at residues 1–34 (MLFN…QQES), 65–101 (RQNN…GYKN), 154–406 (DEKD…ENPE), and 770–816 (RQHK…VMYA). The segment covering 18-32 (NQSSANTQNQQAHQQ) has biased composition (low complexity). A compositionally biased stretch (polar residues) spans 83 to 92 (VSATSAYSKQ). The segment covering 161 to 223 (TTTSSSTSTS…STSTTSTSTT (63 aa)) has biased composition (low complexity). Residues 246 to 260 (ESTSIGKGTADSAQI) show a composition bias toward polar residues. At Ser-286 the chain carries Phosphoserine. Basic and acidic residues predominate over residues 292-316 (DEQKEEKSDVKKVNPPSGEEKKEVE). A compositionally biased stretch (acidic residues) spans 317-326 (AEGDAEEETE). Low complexity predominate over residues 327-342 (QSSAEESAERTSTPET). Phosphoserine occurs at positions 343 and 347. A compositionally biased stretch (acidic residues) spans 343-353 (SEPESEEDESP). The span at 380 to 396 (KSPTSSSTQKSKTAAPS) shows a compositional bias: low complexity. Composition is skewed to basic and acidic residues over residues 770-792 (RQHK…DRSQ) and 799-816 (PKDD…VMYA). Thr-809 bears the Phosphothreonine mark.

Post-translationally, pyrophosphorylated by 5-diphosphoinositol pentakisphosphate (5-IP7). Serine pyrophosphorylation is achieved by Mg(2+)-dependent, but enzyme independent transfer of a beta-phosphate from a inositol pyrophosphate to a pre-phosphorylated serine residue.

This is an uncharacterized protein from Saccharomyces cerevisiae (strain ATCC 204508 / S288c) (Baker's yeast).